The following is a 74-amino-acid chain: Acyl carrier protein (74 aa).

Residues 1–73 (MAVFEKVQEI…DLVAYVEEKT (73 aa)) enclose the Carrier domain. An O-(pantetheine 4'-phosphoryl)serine modification is found at S35.

This sequence belongs to the acyl carrier protein (ACP) family. Post-translationally, 4'-phosphopantetheine is transferred from CoA to a specific serine of apo-ACP by AcpS. This modification is essential for activity because fatty acids are bound in thioester linkage to the sulfhydryl of the prosthetic group.

The protein resides in the cytoplasm. It participates in lipid metabolism; fatty acid biosynthesis. Carrier of the growing fatty acid chain in fatty acid biosynthesis. The chain is Acyl carrier protein from Streptococcus thermophilus (strain CNRZ 1066).